We begin with the raw amino-acid sequence, 284 residues long: Rubber cis-polyprenyltransferase HRT2 (284 aa).

D41 is a catalytic residue.

It belongs to the UPP synthase family. Predominantly expressed in latex.

The enzyme catalyses (cis-prenyl)(n)-diphosphate + isopentenyl diphosphate = (cis-prenyl)(n+1)-diphosphate + diphosphate. Functionally, proposed to be involved in rubber biosynthesis as a particle-bound rubber transferase responsible for the cis-1,4-polymerization of isoprene subunits. Probably requires additional factors for the production of high molecular mass rubber. This Hevea brasiliensis (Para rubber tree) protein is Rubber cis-polyprenyltransferase HRT2 (HRT2).